We begin with the raw amino-acid sequence, 208 residues long: Adenylyl-sulfate kinase (208 aa).

35–42 (GLSGSGKS) serves as a coordination point for ATP. Residue Ser109 is the Phosphoserine intermediate of the active site.

This sequence belongs to the APS kinase family.

It catalyses the reaction adenosine 5'-phosphosulfate + ATP = 3'-phosphoadenylyl sulfate + ADP + H(+). It participates in sulfur metabolism; hydrogen sulfide biosynthesis; sulfite from sulfate: step 2/3. In terms of biological role, catalyzes the synthesis of activated sulfate. In Geotalea uraniireducens (strain Rf4) (Geobacter uraniireducens), this protein is Adenylyl-sulfate kinase.